The primary structure comprises 1002 residues: BTB/POZ domain-containing protein At1g04390 (1002 aa).

BTB domains lie at 680-758 (SDMR…EVES) and 808-889 (SDVI…PKPP).

The protein operates within protein modification; protein ubiquitination. In terms of biological role, may act as a substrate-specific adapter of an E3 ubiquitin-protein ligase complex (CUL3-RBX1-BTB) which mediates the ubiquitination and subsequent proteasomal degradation of target proteins. The polypeptide is BTB/POZ domain-containing protein At1g04390 (Arabidopsis thaliana (Mouse-ear cress)).